The sequence spans 264 residues: Undecaprenyl-diphosphatase 2 (264 aa).

Helical transmembrane passes span 29 to 49 (GSAF…SYFW), 77 to 97 (SWIV…SGVL), 107 to 127 (LTVI…AEIF), 137 to 157 (ASLA…IPGV), 180 to 200 (FSFL…LWEL), 212 to 232 (VLAT…WGLM), and 243 to 263 (FVIY…MGWL).

This sequence belongs to the UppP family.

Its subcellular location is the cell inner membrane. It catalyses the reaction di-trans,octa-cis-undecaprenyl diphosphate + H2O = di-trans,octa-cis-undecaprenyl phosphate + phosphate + H(+). Catalyzes the dephosphorylation of undecaprenyl diphosphate (UPP). Confers resistance to bacitracin. This chain is Undecaprenyl-diphosphatase 2, found in Mesorhizobium japonicum (strain LMG 29417 / CECT 9101 / MAFF 303099) (Mesorhizobium loti (strain MAFF 303099)).